The following is a 798-amino-acid chain: General transcription and DNA repair factor IIH helicase/translocase subunit XPB (798 aa).

Disordered regions lie at residues 1–62 (MGPP…EQIN) and 235–254 (PPGA…GADG). The Nuclear localization signal signature appears at 6-22 (KSRKDRSGGDKFGKKRR). The span at 10-25 (DRSGGDKFGKKRRAED) shows a compositional bias: basic and acidic residues. Positions 33–42 (DDNDSLDATE) are enriched in acidic residues. The Helicase ATP-binding domain maps to 343 to 504 (MFGNGRARSG…DLNFLIGPKL (162 aa)). 360–367 (AGKSLVGV) is a binding site for ATP. The DEVH box motif lies at 457 to 460 (DEVH). Residues 558–713 (RSCQFLIKYH…KVITHLKGMD (156 aa)) enclose the Helicase C-terminal domain. A disordered region spans residues 746–765 (LPGEPGYRPSGSGGAVRRVG).

It belongs to the helicase family. RAD25/XPB subfamily. Component of the 7-subunit TFIIH core complex composed of haywire/XPB/ERCC3, XPD/ERCC2, GTF2H1, GTF2H2, GTF2H3, GTF2H4 and GTF2H5, which is active in NER. The core complex associates with the 3-subunit CDK-activating kinase (CAK) module composed of CCNH/cyclin H, CDK7 and MNAT1 to form the 10-subunit holoenzyme (holo-TFIIH) active in transcription. Interacts with PUF60. Interacts with ATF7IP. Interacts with Epstein-Barr virus EBNA2.

The protein resides in the nucleus. It catalyses the reaction Couples ATP hydrolysis with the unwinding of duplex DNA by translocating in the 3'-5' direction.. The enzyme catalyses ATP + H2O = ADP + phosphate + H(+). Functionally, ATP-dependent 3'-5' DNA helicase/translocase; binds dsDNA rather than ssDNA, unzipping it in a translocase rather than classical helicase activity. Component of the general transcription and DNA repair factor IIH (TFIIH) core complex. When complexed to CDK-activating kinase (CAK), involved in RNA transcription by RNA polymerase II. The ATPase activity of XPB/ERCC3, but not its helicase activity, is required for DNA opening; it may wrap around the damaged DNA wedging it open, causing localized melting and twisting that allows XPD/ERCC2 helicase to anchor. The ATP-dependent helicase activity of XPB/ERCC3 may be required for promoter escape. Also involved in transcription-coupled nucleotide excision repair (NER) of damaged DNA. In NER, TFIIH acts by opening DNA around the lesion to allow the excision of the damaged oligonucleotide and its replacement by a new DNA fragment. The structure of the TFIIH transcription complex differs from the NER-TFIIH complex; large movements by XPD/ERCC2 and XPB/ERCC3 are stabilized by XPA. The polypeptide is General transcription and DNA repair factor IIH helicase/translocase subunit XPB (hay) (Drosophila melanogaster (Fruit fly)).